We begin with the raw amino-acid sequence, 177 residues long: Large ribosomal subunit protein uL6 (177 aa).

It belongs to the universal ribosomal protein uL6 family. As to quaternary structure, part of the 50S ribosomal subunit.

Its function is as follows. This protein binds to the 23S rRNA, and is important in its secondary structure. It is located near the subunit interface in the base of the L7/L12 stalk, and near the tRNA binding site of the peptidyltransferase center. In Rickettsia massiliae (strain Mtu5), this protein is Large ribosomal subunit protein uL6.